The chain runs to 423 residues: Serine--tRNA ligase (423 aa).

Residue 230–232 (TAE) participates in L-serine binding. Residue 261–263 (RQE) coordinates ATP. Glu-284 contacts L-serine. 348–351 (EISS) is a binding site for ATP. Residue Ser-384 coordinates L-serine.

Belongs to the class-II aminoacyl-tRNA synthetase family. Type-1 seryl-tRNA synthetase subfamily. Homodimer. The tRNA molecule binds across the dimer.

It is found in the cytoplasm. The enzyme catalyses tRNA(Ser) + L-serine + ATP = L-seryl-tRNA(Ser) + AMP + diphosphate + H(+). The catalysed reaction is tRNA(Sec) + L-serine + ATP = L-seryl-tRNA(Sec) + AMP + diphosphate + H(+). Its pathway is aminoacyl-tRNA biosynthesis; selenocysteinyl-tRNA(Sec) biosynthesis; L-seryl-tRNA(Sec) from L-serine and tRNA(Sec): step 1/1. Functionally, catalyzes the attachment of serine to tRNA(Ser). Is also able to aminoacylate tRNA(Sec) with serine, to form the misacylated tRNA L-seryl-tRNA(Sec), which will be further converted into selenocysteinyl-tRNA(Sec). The polypeptide is Serine--tRNA ligase (Thermoanaerobacter pseudethanolicus (strain ATCC 33223 / 39E) (Clostridium thermohydrosulfuricum)).